The following is a 109-amino-acid chain: U4-lycotoxin-Ls1a (109 aa).

Residues 1–22 (MKVLVLFSVLFLTLFSYSSTEA) form the signal peptide. Residues 23–44 (IDEFDSDAEEDMLSLMANEQVR) constitute a propeptide that is removed on maturation. The knottin domain stretch occupies residues 45 to 88 (AKACTPRLHDCSHDRHSCCRGELFKDVCYCFYPEGEDKTEVCSC). Intrachain disulfides connect C48-C63, C55-C72, C62-C88, and C74-C86. The segment at 89-108 (QQPKSHKYIEKVVDKAKTVV) is linear cationic cytotoxin domain.

This sequence belongs to the neurotoxin 19 (CSTX) family. 05 (U4-Lctx) subfamily. As to expression, expressed by the venom gland.

The protein resides in the secreted. Its function is as follows. Enhances the high-affinity desensitization of human P2RX3 purinoceptors. This is U4-lycotoxin-Ls1a from Lycosa singoriensis (Wolf spider).